We begin with the raw amino-acid sequence, 134 residues long: Large ribosomal subunit protein bL20 (134 aa).

Belongs to the bacterial ribosomal protein bL20 family.

In terms of biological role, binds directly to 23S ribosomal RNA and is necessary for the in vitro assembly process of the 50S ribosomal subunit. It is not involved in the protein synthesizing functions of that subunit. The sequence is that of Large ribosomal subunit protein bL20 from Allorhizobium ampelinum (strain ATCC BAA-846 / DSM 112012 / S4) (Agrobacterium vitis (strain S4)).